The sequence spans 436 residues: Gamma-glutamyl phosphate reductase (436 aa).

It belongs to the gamma-glutamyl phosphate reductase family.

The protein resides in the cytoplasm. The enzyme catalyses L-glutamate 5-semialdehyde + phosphate + NADP(+) = L-glutamyl 5-phosphate + NADPH + H(+). Its pathway is amino-acid biosynthesis; L-proline biosynthesis; L-glutamate 5-semialdehyde from L-glutamate: step 2/2. Its function is as follows. Catalyzes the NADPH-dependent reduction of L-glutamate 5-phosphate into L-glutamate 5-semialdehyde and phosphate. The product spontaneously undergoes cyclization to form 1-pyrroline-5-carboxylate. In Prochlorococcus marinus (strain MIT 9215), this protein is Gamma-glutamyl phosphate reductase.